Consider the following 290-residue polypeptide: Light-independent protochlorophyllide reductase iron-sulfur ATP-binding protein (290 aa).

ATP contacts are provided by residues 34-39 (GIGKST) and lysine 63. Serine 38 contributes to the Mg(2+) binding site. Residues cysteine 119 and cysteine 153 each coordinate [4Fe-4S] cluster. ATP is bound by residues 204 to 205 (NR) and 228 to 230 (PDL).

This sequence belongs to the NifH/BchL/ChlL family. As to quaternary structure, homodimer. Protochlorophyllide reductase is composed of three subunits; BchL, BchN and BchB. [4Fe-4S] cluster serves as cofactor.

It catalyses the reaction chlorophyllide a + oxidized 2[4Fe-4S]-[ferredoxin] + 2 ADP + 2 phosphate = protochlorophyllide a + reduced 2[4Fe-4S]-[ferredoxin] + 2 ATP + 2 H2O. It functions in the pathway porphyrin-containing compound metabolism; bacteriochlorophyll biosynthesis (light-independent). Functionally, component of the dark-operative protochlorophyllide reductase (DPOR) that uses Mg-ATP and reduced ferredoxin to reduce ring D of protochlorophyllide (Pchlide) to form chlorophyllide a (Chlide). This reaction is light-independent. The L component serves as a unique electron donor to the NB-component of the complex, and binds Mg-ATP. The sequence is that of Light-independent protochlorophyllide reductase iron-sulfur ATP-binding protein from Rhodospirillum rubrum.